The chain runs to 279 residues: Zinc finger CCCH domain-containing protein 1 (279 aa).

The segment at Asp20–Gly45 is disordered. 2 C3H1-type zinc fingers span residues Phe56 to Glu84 and Arg139 to Ala167.

The sequence is that of Zinc finger CCCH domain-containing protein 1 from Oryza sativa subsp. japonica (Rice).